The chain runs to 55 residues: Large ribosomal subunit protein bL33 (55 aa).

This sequence belongs to the bacterial ribosomal protein bL33 family.

The polypeptide is Large ribosomal subunit protein bL33 (Rhodopseudomonas palustris (strain BisB18)).